Consider the following 64-residue polypeptide: Toxin Tce3 (64 aa).

The LCN-type CS-alpha/beta domain occupies 1–62; it reads KDGYIIEHRG…IFDSNNNKCS (62 aa). Disulfide bonds link Cys-11–Cys-61, Cys-15–Cys-37, Cys-23–Cys-42, and Cys-27–Cys-44.

The protein belongs to the long (4 C-C) scorpion toxin superfamily. Sodium channel inhibitor family. Beta subfamily. As to expression, expressed by the venom gland.

The protein localises to the secreted. Inhibits the sodium (Nav) currents in an apparent irreversible manner. Produces small depolarization and induces repetitive firing in squid axons. Is specific for arthropods (crickets, triatomides, crabs and squids), but is non-toxic to mice. Shows antibacterial activity against both Gram-positive and Gram-negative bacteria. This chain is Toxin Tce3, found in Tityus cerroazul (Scorpion).